A 161-amino-acid polypeptide reads, in one-letter code: SsrA-binding protein (161 aa).

Belongs to the SmpB family.

It is found in the cytoplasm. Its function is as follows. Required for rescue of stalled ribosomes mediated by trans-translation. Binds to transfer-messenger RNA (tmRNA), required for stable association of tmRNA with ribosomes. tmRNA and SmpB together mimic tRNA shape, replacing the anticodon stem-loop with SmpB. tmRNA is encoded by the ssrA gene; the 2 termini fold to resemble tRNA(Ala) and it encodes a 'tag peptide', a short internal open reading frame. During trans-translation Ala-aminoacylated tmRNA acts like a tRNA, entering the A-site of stalled ribosomes, displacing the stalled mRNA. The ribosome then switches to translate the ORF on the tmRNA; the nascent peptide is terminated with the 'tag peptide' encoded by the tmRNA and targeted for degradation. The ribosome is freed to recommence translation, which seems to be the essential function of trans-translation. In Psychromonas ingrahamii (strain DSM 17664 / CCUG 51855 / 37), this protein is SsrA-binding protein.